The primary structure comprises 245 residues: Acetylglutamate kinase (245 aa).

Residues 41-42 (GG), Arg-63, and Asn-156 contribute to the substrate site.

Belongs to the acetylglutamate kinase family. ArgB subfamily.

It is found in the cytoplasm. It carries out the reaction N-acetyl-L-glutamate + ATP = N-acetyl-L-glutamyl 5-phosphate + ADP. The protein operates within amino-acid biosynthesis; L-arginine biosynthesis; N(2)-acetyl-L-ornithine from L-glutamate: step 2/4. Its function is as follows. Catalyzes the ATP-dependent phosphorylation of N-acetyl-L-glutamate. The sequence is that of Acetylglutamate kinase from Leuconostoc citreum (strain KM20).